A 55-amino-acid chain; its full sequence is Large ribosomal subunit protein bL33 (55 aa).

Belongs to the bacterial ribosomal protein bL33 family.

The protein is Large ribosomal subunit protein bL33 of Zymomonas mobilis subsp. mobilis (strain ATCC 31821 / ZM4 / CP4).